The primary structure comprises 135 residues: Succinate dehydrogenase assembly factor 3, mitochondrial (135 aa).

The transit peptide at 1–12 directs the protein to the mitochondrion; sequence MRIFTRLLYAAP.

This sequence belongs to the complex I LYR family. SDHAF3 subfamily. As to quaternary structure, interacts with the iron-sulfur protein subunit within the SDH catalytic dimer.

The protein resides in the mitochondrion matrix. In terms of biological role, plays an essential role in the assembly of succinate dehydrogenase (SDH), an enzyme complex (also referred to as respiratory complex II) that is a component of both the tricarboxylic acid (TCA) cycle and the mitochondrial electron transport chain, and which couples the oxidation of succinate to fumarate with the reduction of ubiquinone (coenzyme Q) to ubiquinol. Promotes maturation of the iron-sulfur protein subunit of the SDH catalytic dimer, protecting it from the deleterious effects of oxidants. May act together with SDHAF1. The chain is Succinate dehydrogenase assembly factor 3, mitochondrial from Emericella nidulans (strain FGSC A4 / ATCC 38163 / CBS 112.46 / NRRL 194 / M139) (Aspergillus nidulans).